The primary structure comprises 410 residues: F-box/WD-40 repeat-containing protein 1 (410 aa).

Residues 32 to 79 (SKECSLLPFELFEEILCRVPTKSLLRLKLTCKRWLALFNDKRFIYKHL) form the F-box domain. 2 WD repeats span residues 109 to 150 (PNKF…VRWI) and 269 to 309 (DVHN…NGVS).

This is F-box/WD-40 repeat-containing protein 1 (FBW1) from Arabidopsis thaliana (Mouse-ear cress).